The following is a 449-amino-acid chain: Methylenetetrahydrofolate--tRNA-(uracil-5-)-methyltransferase TrmFO (449 aa).

10 to 15 (GGGLAG) serves as a coordination point for FAD.

Belongs to the MnmG family. TrmFO subfamily. FAD serves as cofactor.

It is found in the cytoplasm. It catalyses the reaction uridine(54) in tRNA + (6R)-5,10-methylene-5,6,7,8-tetrahydrofolate + NADH + H(+) = 5-methyluridine(54) in tRNA + (6S)-5,6,7,8-tetrahydrofolate + NAD(+). The enzyme catalyses uridine(54) in tRNA + (6R)-5,10-methylene-5,6,7,8-tetrahydrofolate + NADPH + H(+) = 5-methyluridine(54) in tRNA + (6S)-5,6,7,8-tetrahydrofolate + NADP(+). Functionally, catalyzes the folate-dependent formation of 5-methyl-uridine at position 54 (M-5-U54) in all tRNAs. The polypeptide is Methylenetetrahydrofolate--tRNA-(uracil-5-)-methyltransferase TrmFO (Sphingopyxis alaskensis (strain DSM 13593 / LMG 18877 / RB2256) (Sphingomonas alaskensis)).